A 244-amino-acid polypeptide reads, in one-letter code: NAD(P)H-quinone oxidoreductase subunit K (244 aa).

4 residues coordinate [4Fe-4S] cluster: Cys51, Cys52, Cys116, and Cys147.

It belongs to the complex I 20 kDa subunit family. In terms of assembly, NDH-1 can be composed of about 15 different subunits; different subcomplexes with different compositions have been identified which probably have different functions. Requires [4Fe-4S] cluster as cofactor.

The protein localises to the cellular thylakoid membrane. It catalyses the reaction a plastoquinone + NADH + (n+1) H(+)(in) = a plastoquinol + NAD(+) + n H(+)(out). It carries out the reaction a plastoquinone + NADPH + (n+1) H(+)(in) = a plastoquinol + NADP(+) + n H(+)(out). In terms of biological role, NDH-1 shuttles electrons from an unknown electron donor, via FMN and iron-sulfur (Fe-S) centers, to quinones in the respiratory and/or the photosynthetic chain. The immediate electron acceptor for the enzyme in this species is believed to be plastoquinone. Couples the redox reaction to proton translocation, and thus conserves the redox energy in a proton gradient. Cyanobacterial NDH-1 also plays a role in inorganic carbon-concentration. In Synechococcus sp. (strain JA-3-3Ab) (Cyanobacteria bacterium Yellowstone A-Prime), this protein is NAD(P)H-quinone oxidoreductase subunit K.